The following is a 137-amino-acid chain: ATP synthase epsilon chain (137 aa).

Belongs to the ATPase epsilon chain family. F-type ATPases have 2 components, CF(1) - the catalytic core - and CF(0) - the membrane proton channel. CF(1) has five subunits: alpha(3), beta(3), gamma(1), delta(1), epsilon(1). CF(0) has three main subunits: a, b and c.

It localises to the cell membrane. Produces ATP from ADP in the presence of a proton gradient across the membrane. In Syntrophomonas wolfei subsp. wolfei (strain DSM 2245B / Goettingen), this protein is ATP synthase epsilon chain.